We begin with the raw amino-acid sequence, 167 residues long: NAD(P)H-quinone oxidoreductase subunit I, chloroplastic (167 aa).

4Fe-4S ferredoxin-type domains are found at residues 55–84 (GRIHFEFDKCIACEVCVRVCPIDLPVVDWK) and 95–124 (LNYSIDFGICIFCGNCVEYCPTNCLSMTEE). [4Fe-4S] cluster contacts are provided by C64, C67, C70, C74, C104, C107, C110, and C114.

Belongs to the complex I 23 kDa subunit family. As to quaternary structure, NDH is composed of at least 16 different subunits, 5 of which are encoded in the nucleus. Requires [4Fe-4S] cluster as cofactor.

It localises to the plastid. It is found in the chloroplast thylakoid membrane. It catalyses the reaction a plastoquinone + NADH + (n+1) H(+)(in) = a plastoquinol + NAD(+) + n H(+)(out). It carries out the reaction a plastoquinone + NADPH + (n+1) H(+)(in) = a plastoquinol + NADP(+) + n H(+)(out). Its function is as follows. NDH shuttles electrons from NAD(P)H:plastoquinone, via FMN and iron-sulfur (Fe-S) centers, to quinones in the photosynthetic chain and possibly in a chloroplast respiratory chain. The immediate electron acceptor for the enzyme in this species is believed to be plastoquinone. Couples the redox reaction to proton translocation, and thus conserves the redox energy in a proton gradient. The polypeptide is NAD(P)H-quinone oxidoreductase subunit I, chloroplastic (Jasminum nudiflorum (Winter jasmine)).